A 298-amino-acid polypeptide reads, in one-letter code: MQLEKMITEGSNAASAEIDRVSTLEMCRIINDEDKTVPLAVERVLPDIAAAIDVIHTQVSGGGRLIYLGAGTSGRLGILDASECPPTYGVKPGLVVGLIAGGEYAIQHAVEGAEDSREGGVNDLKNIGLTAQDVVVGIAASGRTPYVIAGLEYARQLGCRTVGISCNPGSAVSSTAEFAITPVVGAEVVTGSSRMKAGTAQKLVLNMLSTGLMIKSGKVFGNLMVDVVATNEKLHVRQVNIVKNATGCNAEQAEAALIACERNCKTAIVMVLKNLDADEAKKCLDQHGGFIRKALEKE.

In terms of domain architecture, SIS spans 55-218; sequence IHTQVSGGGR…STGLMIKSGK (164 aa). E83 serves as the catalytic Proton donor. Residue E114 is part of the active site.

The protein belongs to the GCKR-like family. MurNAc-6-P etherase subfamily. As to quaternary structure, homodimer.

The enzyme catalyses N-acetyl-D-muramate 6-phosphate + H2O = N-acetyl-D-glucosamine 6-phosphate + (R)-lactate. Its pathway is amino-sugar metabolism; 1,6-anhydro-N-acetylmuramate degradation. It participates in amino-sugar metabolism; N-acetylmuramate degradation. It functions in the pathway cell wall biogenesis; peptidoglycan recycling. In terms of biological role, specifically catalyzes the cleavage of the D-lactyl ether substituent of MurNAc 6-phosphate, producing GlcNAc 6-phosphate and D-lactate. Together with AnmK, is also required for the utilization of anhydro-N-acetylmuramic acid (anhMurNAc) either imported from the medium or derived from its own cell wall murein, and thus plays a role in cell wall recycling. The chain is N-acetylmuramic acid 6-phosphate etherase from Escherichia coli O6:K15:H31 (strain 536 / UPEC).